A 337-amino-acid chain; its full sequence is TSGKVSIKWFEDGVLNVTESCLDRHLATRGDQVAIIWEGDDPNADSKVTYRELHARVCQLANAMRGMGVQKGDRVCIYLPMIEEAAVAMLACARIGAVHSIVFGGFSPDSLSSRIQDSDCVLLITADEGRRGGRKVPLKVNADEALKTCPSIRHVIVAKNTGGNVAMQEGRDHWWADACDNQPKTSTPEPMGAEDPLFILYTSGSTGKPKGVLHTTGGYLVWASFTHQNVFDYRDGEIYWCTADVGWVTGHTYIVYGPLANGATTLMFEGVPNYPTVSRFWEVIDKHQVNIFYTAPTAIRALMRDGEAPVKKTSRKSLRILGSVGEPINPEAWLWYY.

CoA contacts are provided by residues 131–134 (RGGR), T249, and N273. ATP is bound at residue 325 to 327 (GEP).

The protein belongs to the ATP-dependent AMP-binding enzyme family. It depends on Mg(2+) as a cofactor. Post-translationally, acetylated. Deacetylation by the SIR2-homolog deacetylase activates the enzyme.

The enzyme catalyses acetate + ATP + CoA = acetyl-CoA + AMP + diphosphate. Functionally, catalyzes the conversion of acetate into acetyl-CoA (AcCoA), an essential intermediate at the junction of anabolic and catabolic pathways. AcsA undergoes a two-step reaction. In the first half reaction, AcsA combines acetate with ATP to form acetyl-adenylate (AcAMP) intermediate. In the second half reaction, it can then transfer the acetyl group from AcAMP to the sulfhydryl group of CoA, forming the product AcCoA. This chain is Acetyl-coenzyme A synthetase (acsA), found in Nostoc linckia.